Here is a 652-residue protein sequence, read N- to C-terminus: DNA ligase (652 aa).

Residues 29-33, 78-79, and Glu-107 each bind NAD(+); these read DSEYD and SL. The active-site N6-AMP-lysine intermediate is the Lys-109. Positions 130, 164, 278, and 302 each coordinate NAD(+). Zn(2+) is bound by residues Cys-395, Cys-398, Cys-413, and Cys-418. The region spanning 577–652 is the BRCT domain; that stretch reads VADAALSGLT…VRDEAWLESL (76 aa).

It belongs to the NAD-dependent DNA ligase family. LigA subfamily. Requires Mg(2+) as cofactor. Mn(2+) serves as cofactor.

The enzyme catalyses NAD(+) + (deoxyribonucleotide)n-3'-hydroxyl + 5'-phospho-(deoxyribonucleotide)m = (deoxyribonucleotide)n+m + AMP + beta-nicotinamide D-nucleotide.. Its function is as follows. DNA ligase that catalyzes the formation of phosphodiester linkages between 5'-phosphoryl and 3'-hydroxyl groups in double-stranded DNA using NAD as a coenzyme and as the energy source for the reaction. It is essential for DNA replication and repair of damaged DNA. This is DNA ligase from Streptococcus pneumoniae (strain JJA).